Consider the following 255-residue polypeptide: Pimeloyl-[acyl-carrier protein] methyl ester esterase (255 aa).

Residues tryptophan 18, 78 to 79 (SL), and 139 to 143 (FLALD) each bind substrate. Serine 78 functions as the Nucleophile in the catalytic mechanism. Residues aspartate 203 and histidine 233 contribute to the active site. Histidine 233 provides a ligand contact to substrate.

The protein belongs to the AB hydrolase superfamily. Carboxylesterase BioH family. Monomer.

It is found in the cytoplasm. The enzyme catalyses 6-carboxyhexanoyl-[ACP] methyl ester + H2O = 6-carboxyhexanoyl-[ACP] + methanol + H(+). The protein operates within cofactor biosynthesis; biotin biosynthesis. The physiological role of BioH is to remove the methyl group introduced by BioC when the pimeloyl moiety is complete. It allows to synthesize pimeloyl-ACP via the fatty acid synthetic pathway through the hydrolysis of the ester bonds of pimeloyl-ACP esters. The polypeptide is Pimeloyl-[acyl-carrier protein] methyl ester esterase (Xylella fastidiosa (strain M12)).